Consider the following 510-residue polypeptide: Insulinoma-associated protein 1 (510 aa).

The segment covering 1-12 (MPRGFLVKRSKK) has biased composition (basic residues). Positions 1 to 20 (MPRGFLVKRSKKSTPVSYRV) are SNAG domain. Disordered stretches follow at residues 1–110 (MPRG…SREH) and 176–226 (GAEA…PKAI). The tract at residues 2 to 7 (PRGFLV) is required and sufficient for interaction with KDM1A. The interval 43–58 (PPAPSPVPGPLPPPPP) is necessary for interaction with CCND1. Positions 43–59 (PPAPSPVPGPLPPPPPA) are enriched in pro residues. Composition is skewed to low complexity over residues 64–74 (AALAAALACAP) and 209–218 (EPPAKAVKAP). The C2H2-type 1; atypical zinc-finger motif lies at 267–287 (FICQLCKEEYADPFALAQHKC). The C2H2-type 2 zinc-finger motif lies at 295–317 (YRCPECAKVFSCPANLASHRRWH). A disordered region spans residues 315–362 (RWHKPRPAPAAARAPEPEAAARAEAREAPGGGSDRDTPSPGGVSESGS). The span at 329-351 (PEPEAAARAEAREAPGGGSDRDT) shows a compositional bias: basic and acidic residues. C2H2-type zinc fingers lie at residues 367 to 389 (YECH…LLAH), 441 to 464 (HLCP…RLLH), and 469 to 492 (FPCK…NKCH).

The protein belongs to the INSM1 family. As to quaternary structure, interacts (via the SNAG domain) with HDAC1. Interacts (via the SNAG domain) with HDAC2. Interacts (via the SNAG domain) with KDM1A. Interacts (via the SNAG domain) with RCOR1. Interacts with SORBS1. Interacts (via the N-terminal region) with CCND1 (via cyclin N-terminal domain); the interaction competes with the binding of CCND1 to CDK4 during cell cycle progression and increases its transcriptional repressor activity. Interacts with HDAC3; the interaction increases its transcriptional repressor activity. In terms of tissue distribution, expressed in pancreatic duct cells. Expressed in several tumor cell lines of neuroendocrine origin including pheochromocytoma, medullary thyroid carcinoma, insulinoma, medulloblastoma, retinoblastoma, pheochromacytoma, medullary thyroid carcinoma and small cell lung carcinoma.

The protein localises to the nucleus. Functionally, sequence-specific DNA-binding transcriptional regulator that plays a key role in neurogenesis and neuroendocrine cell differentiation during embryonic and/or fetal development. Binds to the consensus sequence 5'-[TG][TC][TC][TT][GA]GGG[CG]A-3' in target promoters. Acts as a transcriptional repressor of NEUROD1 and INS expression via its interaction with cyclin CCND1 in a cell cycle-independent manner. Negatively regulates skeletal muscle-specific gene expression in endocrine cells of the pituitary by inhibiting the Notch signaling pathway. Represses target gene transcription by recruiting chromatin-modifying factors, such as HDAC1, HDAC2, HDAC3, KDM1A and RCOR1 histone deacetylases. Binds to its own promoter, suggesting autoregulation as a self-control feedback mechanism. Competes with histone H3 for the same binding site on the histone demethylase complex formed by KDM1A and RCOR1, and thereby inhibits demethylation of histone H3 at 'Lys-4'. Promotes the generation and expansion of neuronal basal progenitor cells in the developing neocortex. Involved in the differentiation of endocrine cells of the developing anterior pituitary gland, of the pancreas and intestine, and of sympatho-adrenal cells in the peripheral nervous system. Promotes cell cycle signaling arrest and inhibition of cellular proliferation. This Homo sapiens (Human) protein is Insulinoma-associated protein 1 (INSM1).